A 336-amino-acid polypeptide reads, in one-letter code: Anthranilate phosphoribosyltransferase (336 aa).

5-phospho-alpha-D-ribose 1-diphosphate-binding positions include Gly-78, 81 to 82 (GD), Thr-86, 88 to 91 (NVST), 106 to 114 (KHGNYSVSS), and Ser-118. Anthranilate is bound at residue Gly-78. A Mg(2+)-binding site is contributed by Ser-90. Position 109 (Asn-109) interacts with anthranilate. Position 164 (Arg-164) interacts with anthranilate. The Mg(2+) site is built by Asp-222 and Glu-223.

This sequence belongs to the anthranilate phosphoribosyltransferase family. As to quaternary structure, homodimer. Mg(2+) serves as cofactor.

It carries out the reaction N-(5-phospho-beta-D-ribosyl)anthranilate + diphosphate = 5-phospho-alpha-D-ribose 1-diphosphate + anthranilate. It participates in amino-acid biosynthesis; L-tryptophan biosynthesis; L-tryptophan from chorismate: step 2/5. Functionally, catalyzes the transfer of the phosphoribosyl group of 5-phosphorylribose-1-pyrophosphate (PRPP) to anthranilate to yield N-(5'-phosphoribosyl)-anthranilate (PRA). This Halobacterium salinarum (strain ATCC 29341 / DSM 671 / R1) protein is Anthranilate phosphoribosyltransferase.